Here is a 186-residue protein sequence, read N- to C-terminus: Peptidyl-tRNA hydrolase (186 aa).

TRNA is bound at residue tyrosine 14. Catalysis depends on histidine 19, which acts as the Proton acceptor. TRNA contacts are provided by tyrosine 61, asparagine 63, and asparagine 107.

The protein belongs to the PTH family. As to quaternary structure, monomer.

It localises to the cytoplasm. The catalysed reaction is an N-acyl-L-alpha-aminoacyl-tRNA + H2O = an N-acyl-L-amino acid + a tRNA + H(+). Its function is as follows. Hydrolyzes ribosome-free peptidyl-tRNAs (with 1 or more amino acids incorporated), which drop off the ribosome during protein synthesis, or as a result of ribosome stalling. In terms of biological role, catalyzes the release of premature peptidyl moieties from peptidyl-tRNA molecules trapped in stalled 50S ribosomal subunits, and thus maintains levels of free tRNAs and 50S ribosomes. The sequence is that of Peptidyl-tRNA hydrolase from Helicobacter pylori (strain HPAG1).